A 236-amino-acid chain; its full sequence is CD81 protein (236 aa).

Residues Met-1–Tyr-12 are Cytoplasmic-facing. Residues Leu-13 to Leu-33 form a helical membrane-spanning segment. The Extracellular portion of the chain corresponds to Trp-34–Tyr-63. A helical membrane pass occupies residues Ile-64–Ile-84. The Cytoplasmic portion of the chain corresponds to Gln-85–Cys-89. A helical transmembrane segment spans residues Leu-90–Gly-112. The Extracellular portion of the chain corresponds to Phe-113 to Lys-201. Cystine bridges form between Cys-156–Cys-190 and Cys-157–Cys-175. A helical membrane pass occupies residues Leu-202 to Met-224. Glu-219 is a binding site for cholesterol. The Cytoplasmic segment spans residues Val-225–Tyr-236.

It belongs to the tetraspanin (TM4SF) family. Homodimer. Part of a complex composed of CD19, CR2/CD21, CD81 and IFITM1/CD225 in the membrane of mature B cells. Interacts (via the second extracellular domain) with CD19; this interaction is initiated early during biosynthesis in the ER and enables trafficking of only properly folded CD19. Part of a complex that includes MHC class II/HLA-DR molecules and IFITM1. Interacts with IFITM1. Interacts with IFITM2 and IFITM3. Part of integrin-tetraspanin complex composed of CD9, CD81, beta-1 and beta-2 integrins in the membrane of monocyte/macrophages. Interacts (via the second extracellular domain) with integrin ITGAV:ITGB3. Interacts with CD247/CD3 zeta, ICAM1 and CD9 at the immune synapse on T cell membrane. Part of a GPCR-tetraspanin complex consisting at least of ADGRG1, CD81, possibly CD9, and GNA11 in which CD81 enhances the association of ADGRG1 with GNA11. Part of a complex composed of CD9, CD81, PTGFRN and IGSF8. Interacts directly with IGSF8. Interacts with CD53 and SCIMP. Interacts with SAMHD1 (via its C-terminus). Interacts with glypican GPC3 and with the transcriptional repressor HHEX; binding to GPC3 decreases the availability of free CD81 for binding to HHEX, resulting in nuclear translocation of HHEX and transcriptional repression. Interacts with CLDN1. Interacts with CLDN6 and CLDN9. Not glycosylated. In terms of processing, likely constitutively palmitoylated at low levels. Protein palmitoylation is up-regulated upon coligation of BCR and CD9-C2R-CD81 complexes in lipid rafts.

It localises to the cell membrane. The protein resides in the basolateral cell membrane. In terms of biological role, structural component of specialized membrane microdomains known as tetraspanin-enriched microdomains (TERMs), which act as platforms for receptor clustering and signaling. Essential for trafficking and compartmentalization of CD19 receptor on the surface of activated B cells. Upon initial encounter with microbial pathogens, enables the assembly of CD19-CR2/CD21 and B cell receptor (BCR) complexes at signaling TERMs, lowering the threshold dose of antigen required to trigger B cell clonal expansion and antibody production. In T cells, facilitates the localization of CD247/CD3 zeta at antigen-induced synapses with B cells, providing for costimulation and polarization toward T helper type 2 phenotype. Present in MHC class II compartments, may also play a role in antigen presentation. Can act both as positive and negative regulator of homotypic or heterotypic cell-cell fusion processes. Positively regulates sperm-egg fusion and may be involved in acrosome reaction. In myoblasts, associates with CD9 and PTGFRN and inhibits myotube fusion during muscle regeneration. In macrophages, associates with CD9 and beta-1 and beta-2 integrins, and prevents macrophage fusion into multinucleated giant cells specialized in ingesting complement-opsonized large particles. Also prevents the fusion of mononuclear cell progenitors into osteoclasts in charge of bone resorption. May regulate the compartmentalization of enzymatic activities. In T cells, defines the subcellular localization of dNTPase SAMHD1 and permits its degradation by the proteasome, thereby controlling intracellular dNTP levels. Also involved in cell adhesion and motility. Positively regulates integrin-mediated adhesion of macrophages, particularly relevant for the inflammatory response in the lung. The polypeptide is CD81 protein (CD81) (Saguinus oedipus (Cotton-top tamarin)).